A 144-amino-acid chain; its full sequence is uncharacterized protein (144 aa).

The protein belongs to the mimivirus L885/R898 family.

This is an uncharacterized protein from Acanthamoeba polyphaga (Amoeba).